Reading from the N-terminus, the 362-residue chain is Peptide chain release factor 1 (362 aa).

The residue at position 237 (Q237) is an N5-methylglutamine.

It belongs to the prokaryotic/mitochondrial release factor family. In terms of processing, methylated by PrmC. Methylation increases the termination efficiency of RF1.

The protein localises to the cytoplasm. Peptide chain release factor 1 directs the termination of translation in response to the peptide chain termination codons UAG and UAA. The protein is Peptide chain release factor 1 of Vibrio parahaemolyticus serotype O3:K6 (strain RIMD 2210633).